The primary structure comprises 730 residues: Polyphosphate kinase (730 aa).

Positions 1–21 (MMRHDRNVTEIDAETRPDENL) are enriched in basic and acidic residues. The interval 1 to 39 (MMRHDRNVTEIDAETRPDENLWHSGDSAVGAPPAATPAA) is disordered. Asn86 contributes to the ATP binding site. The Mg(2+) site is built by Arg423 and Arg453. His483 acts as the Phosphohistidine intermediate in catalysis. The ATP site is built by Tyr516, Arg612, and His640.

The protein belongs to the polyphosphate kinase 1 (PPK1) family. Mg(2+) is required as a cofactor. In terms of processing, an intermediate of this reaction is the autophosphorylated ppk in which a phosphate is covalently linked to a histidine residue through a N-P bond.

It carries out the reaction [phosphate](n) + ATP = [phosphate](n+1) + ADP. Catalyzes the reversible transfer of the terminal phosphate of ATP to form a long-chain polyphosphate (polyP). The chain is Polyphosphate kinase from Mycolicibacterium paratuberculosis (strain ATCC BAA-968 / K-10) (Mycobacterium paratuberculosis).